Here is a 166-residue protein sequence, read N- to C-terminus: Seed allergenic protein RAG2 (166 aa).

The N-terminal stretch at 1-26 is a signal peptide; it reads MASNKVVFSALLLIIVSVLAATATMA. Cystine bridges form between C41–C93, C55–C81, C63–C125, C82–C141, and C95–C153. N-linked (GlcNAc...) asparagine glycosylation occurs at N147.

Belongs to the cereal trypsin/alpha-amylase inhibitor family. Post-translationally, five disulfide bonds are present.

It is found in the secreted. Seed storage protein. The sequence is that of Seed allergenic protein RAG2 (RAG2) from Oryza sativa subsp. japonica (Rice).